Reading from the N-terminus, the 246-residue chain is Phycocyanobilin:ferredoxin oxidoreductase (246 aa).

Belongs to the HY2 family.

It carries out the reaction (2R,3Z)-phycocyanobilin + 4 oxidized [2Fe-2S]-[ferredoxin] = biliverdin IXalpha + 4 reduced [2Fe-2S]-[ferredoxin] + 4 H(+). Its function is as follows. Catalyzes the four-electron reduction of biliverdin IX-alpha (2-electron reduction at both the A and D rings); the reaction proceeds via an isolatable 2-electron intermediate, 181,182-dihydrobiliverdin. The chain is Phycocyanobilin:ferredoxin oxidoreductase from Synechococcus sp. (strain CC9902).